Consider the following 166-residue polypeptide: uncharacterized protein (166 aa).

3 Pentapeptide repeat domains span residues 38 to 77 (GECL…NLRR), 78 to 117 (ALLD…NLER), and 118 to 157 (SFLR…EFWE).

This is an uncharacterized protein from Synechocystis sp. (strain ATCC 27184 / PCC 6803 / Kazusa).